We begin with the raw amino-acid sequence, 260 residues long: Translation initiation factor 2 subunit alpha (260 aa).

Residues 12–83 (GDLIVGTVHK…KKGHVDASLK (72 aa)) enclose the S1 motif domain.

It belongs to the eIF-2-alpha family. Heterotrimer composed of an alpha, a beta and a gamma chain.

In terms of biological role, eIF-2 functions in the early steps of protein synthesis by forming a ternary complex with GTP and initiator tRNA. This Methanosphaera stadtmanae (strain ATCC 43021 / DSM 3091 / JCM 11832 / MCB-3) protein is Translation initiation factor 2 subunit alpha.